The primary structure comprises 170 residues: Cathelicidin antimicrobial peptide (170 aa).

An N-terminal signal peptide occupies residues 1 to 30; it reads MKTQRHGPSLGRWSLVLLLLGLVMPLAIVA. A propeptide spans 31 to 131 (cathelin-like domain (CLD)); the sequence is QVLSYQEAVL…DISCDKDNRR (101 aa). 2 disulfide bridges follow: cysteine 86–cysteine 97 and cysteine 108–cysteine 125. The tract at residues 150–162 is active core; it reads LKKIGQKIKDFWG.

This sequence belongs to the cathelicidin family. As to quaternary structure, monomer, homodimer or homotrimer (in vitro). Oligomerizes as tetra- or hexamer in solution (in vitro). In terms of processing, proteolytically cleaved by proteinase PRTN3 into antibacterial peptide LL-37. Proteolytically cleaved by cathepsin CTSG and neutrophil elastase ELANE. Post-translationally, resistant to proteolytic degradation in solution, and when bound to both zwitterionic (mimicking mammalian membranes) and negatively charged membranes (mimicking bacterial membranes). After secretion onto the skin surface, the CAMP gene product is processed by a serine protease-dependent mechanism into multiple novel antimicrobial peptides distinct from and shorter than cathelicidin LL-37. These peptides show enhanced antimicrobial action, acquiring the ability to kill skin pathogens such as S.aureus, E.coli and C.albicans. These peptides have lost the ability to stimulate CXCL8/IL8 release from keratinocytes. The peptides act synergistically, killing bacteria at lower concentrations when present together, and maintain activity at increased salt condition.

The protein localises to the secreted. It localises to the vesicle. Antimicrobial protein that is an integral component of the innate immune system. Binds to bacterial lipopolysaccharides (LPS). Acts via neutrophil N-formyl peptide receptors to enhance the release of CXCL2. Postsecretory processing generates multiple cathelicidin antimicrobial peptides with various lengths which act as a topical antimicrobial defense in sweat on skin. The unprocessed precursor form, cathelicidin antimicrobial peptide, inhibits the growth of Gram-negative E.coli and E.aerogenes with efficiencies comparable to that of the mature peptide LL-37 (in vitro). In terms of biological role, antimicrobial peptide that is an integral component of the innate immune system. Binds to bacterial lipopolysaccharides (LPS). Causes membrane permeabilization by forming transmembrane pores (in vitro). Causes lysis of E.coli. Exhibits antimicrobial activity against Gram-negative bacteria such as P.aeruginosa, S.typhimurium, E.aerogenes, E.coli and P.syringae, Gram-positive bacteria such as L.monocytogenes, S.epidermidis, S.pyogenes and S.aureus, as well as vancomycin-resistant enterococci (in vitro). Exhibits antimicrobial activity against methicillin-resistant S.aureus, P.mirabilis, and C.albicans in low-salt media, but not in media containing 100 mM NaCl (in vitro). Forms chiral supramolecular assemblies with quinolone signal (PQS) molecules of P.aeruginosa, which may lead to interference of bacterial quorum signaling and perturbance of bacterial biofilm formation. May form supramolecular fiber-like assemblies on bacterial membranes. Induces cytokine and chemokine producation as well as TNF/TNFA and CSF2/GMCSF production in normal human keratinocytes. Exhibits hemolytic activity against red blood cells. Its function is as follows. Exhibits antimicrobial activity against E.coli and B.megaterium (in vitro). In Trachypithecus cristatus (Silvered leaf-monkey), this protein is Cathelicidin antimicrobial peptide.